The sequence spans 711 residues: Ribosomal RNA large subunit methyltransferase K/L (711 aa).

One can recognise a THUMP domain in the interval 43–154 (TLYRTLLWSR…RENLVISLDL (112 aa)).

The protein belongs to the methyltransferase superfamily. RlmKL family.

It is found in the cytoplasm. The enzyme catalyses guanosine(2445) in 23S rRNA + S-adenosyl-L-methionine = N(2)-methylguanosine(2445) in 23S rRNA + S-adenosyl-L-homocysteine + H(+). The catalysed reaction is guanosine(2069) in 23S rRNA + S-adenosyl-L-methionine = N(2)-methylguanosine(2069) in 23S rRNA + S-adenosyl-L-homocysteine + H(+). Functionally, specifically methylates the guanine in position 2445 (m2G2445) and the guanine in position 2069 (m7G2069) of 23S rRNA. This is Ribosomal RNA large subunit methyltransferase K/L from Haemophilus influenzae (strain 86-028NP).